A 438-amino-acid chain; its full sequence is Citrate synthase (438 aa).

Catalysis depends on residues histidine 306 and aspartate 364.

It belongs to the citrate synthase family.

The catalysed reaction is oxaloacetate + acetyl-CoA + H2O = citrate + CoA + H(+). It functions in the pathway carbohydrate metabolism; tricarboxylic acid cycle; isocitrate from oxaloacetate: step 1/2. This chain is Citrate synthase (gltA), found in Bartonella quintana (strain Toulouse) (Rochalimaea quintana).